A 448-amino-acid polypeptide reads, in one-letter code: Adenylosuccinate synthetase (448 aa).

Residues 22-28 and 50-52 each bind GTP; these read GDEGKGK and GHT. The active-site Proton acceptor is aspartate 23. Mg(2+) is bound by residues aspartate 23 and glycine 50. Residues 23-26, 48-51, threonine 139, arginine 153, glutamine 234, threonine 249, and arginine 321 each bind IMP; these read DEGK and NAGH. The Proton donor role is filled by histidine 51. 317-323 provides a ligand contact to substrate; sequence SVTGRPR. Residues arginine 323, 349-351, and 431-433 each bind GTP; these read KLD and STG.

Belongs to the adenylosuccinate synthetase family. In terms of assembly, homodimer. It depends on Mg(2+) as a cofactor.

Its subcellular location is the cytoplasm. The catalysed reaction is IMP + L-aspartate + GTP = N(6)-(1,2-dicarboxyethyl)-AMP + GDP + phosphate + 2 H(+). Its pathway is purine metabolism; AMP biosynthesis via de novo pathway; AMP from IMP: step 1/2. In terms of biological role, plays an important role in the de novo pathway of purine nucleotide biosynthesis. Catalyzes the first committed step in the biosynthesis of AMP from IMP. The chain is Adenylosuccinate synthetase from Paraburkholderia phymatum (strain DSM 17167 / CIP 108236 / LMG 21445 / STM815) (Burkholderia phymatum).